A 453-amino-acid chain; its full sequence is Serine/threonine-protein phosphatase 2A 55 kDa regulatory subunit B delta isoform (453 aa).

WD repeat units follow at residues 32–71 (AEAD…KGRA), 97–138 (EIEE…KRAE), 181–219 (AHTY…RSFN), and 230–270 (ELTE…LCDR). Residue Ser-285 is modified to Phosphoserine. 3 WD repeats span residues 289-327 (EIIS…RPVE), 344-385 (ENDC…DVTL), and 420-452 (DFNK…QDKI). Tyr-305 carries the post-translational modification Phosphotyrosine. The residue at position 308 (Thr-308) is a Phosphothreonine. Positions 385 to 406 (LEASRENSKPRASLKPRKVCSG) are disordered.

The protein belongs to the phosphatase 2A regulatory subunit B family. As to quaternary structure, PP2A consists of a common heterodimeric core enzyme, composed of a 36 kDa catalytic subunit (subunit C) and a 65 kDa constant regulatory subunit (PR65 or subunit A), that associates with a variety of regulatory subunits. Proteins that associate with the core dimer include three families of regulatory subunits B (the R2/B/PR55/B55, R3/B''/PR72/PR130/PR59 and R5/B'/B56 families), the 48 kDa variable regulatory subunit, viral proteins, and cell signaling molecules. Interacts with ENSA (when phosphorylated at 'Ser-67') and ARPP19 (when phosphorylated at 'Ser-62'), leading to inhibit PP2A activity. Interacts with IER5. As to expression, widely expressed with high levels in brain, heart, placenta, skeletal muscle, testis, thymus and spleen.

Its subcellular location is the cytoplasm. Its function is as follows. Substrate-recognition subunit of protein phosphatase 2A (PP2A) that plays a key role in cell cycle by controlling mitosis entry and exit. Involved in chromosome clustering during late mitosis by mediating dephosphorylation of MKI67. The activity of PP2A complexes containing PPP2R2D (PR55-delta) fluctuate during the cell cycle: the activity is high in interphase and low in mitosis. The chain is Serine/threonine-protein phosphatase 2A 55 kDa regulatory subunit B delta isoform (Ppp2r2d) from Rattus norvegicus (Rat).